The sequence spans 861 residues: Seed linoleate 9S-lipoxygenase-3 (861 aa).

The PLAT domain maps to Gln41 to Ala166. Residues Thr169–Ile861 enclose the Lipoxygenase domain. The tract at residues Asn215–Asp257 is disordered. Over residues Arg237–Thr246 the composition is skewed to basic residues. Residues Arg247 to Asp257 are compositionally biased toward basic and acidic residues. Positions 522, 527, 713, 717, and 861 each coordinate Fe cation.

The protein belongs to the lipoxygenase family. Fe cation serves as cofactor.

It is found in the cytoplasm. The catalysed reaction is (9Z,12Z)-octadecadienoate + O2 = (9S)-hydroperoxy-(10E,12Z)-octadecadienoate. It functions in the pathway lipid metabolism; oxylipin biosynthesis. In terms of biological role, plant lipoxygenase may be involved in a number of diverse aspects of plant physiology including growth and development, pest resistance, and senescence or responses to wounding. It catalyzes the hydroperoxidation of lipids containing a cis,cis-1,4-pentadiene structure. This chain is Seed linoleate 9S-lipoxygenase-3 (LOX1.3), found in Pisum sativum (Garden pea).